The primary structure comprises 739 residues: MSTSSTPSAKPMAEMAAEFGLKPAEYDVVLKRLGREPNLVELGVFSVMWSEHCSYKSSKNQLKKFPIDGPRVICGPGENAGVIDIGDGDAIIFKMESHNHPSYIEPYQGAATGVGGIMRDVFTMGARPIALLNALRFGDPSHPKTKRLVDGVVAGIAGYGNCVGVPTVAGETNFHKGYNGNILVNAMCVGLAKADSIFYSAAPGPGLAVVYFGSKTGRDGIHGATMSSAEFSEDSEEKRPTVQVGDPFAEKLLIEATLELMATGAVAAIQDMGAAGLTSSSVEMAGKGGVGIELNMDMVPQRETGMSAYEMMLSESQERMLAVLKPGREQDGHAIFEKWGLDAAVIGYTTDTGRLVLKHHGETVCDVPLAPLFDDAPLYDRPWVQPALQPRLDPAAVPAPTNWNEAVLKIIGCPDMASKRWLWEQYDRHVMADTLEDSATGCDAGIVRIHGTGKAIAVTSDCTPRYVQADPYEGGKQAVAEAWRNLTAAGALPIAITDNLNFGSPEKPETMGQIVRATDGMAEACRALDFPVVSGNVSLYNETNGVAIPPTPTVGGVGLLEDYDLRTGFGNVAEGDTLVLVGETRGELGASIYLREILGREDGAPPPVDLALERKTGDFVRGLISSGLVAGVHDLSDGGLLVAAADVALASKIGVTLNATSQTHAHAYLLGEDQARYLIATPDPDAVLEAAKEAGVHANVAGVAGGEAFASDGLFSVSLDALRAAHEAWLPGYMSAPKA.

The active site involves H52. ATP-binding residues include Y55 and K94. E96 contacts Mg(2+). Substrate-binding positions include 97–100 (SHNH) and R119. The active-site Proton acceptor is the H98. Mg(2+) is bound at residue D120. Q243 serves as a coordination point for substrate. D271 provides a ligand contact to Mg(2+). Position 315–317 (315–317 (ESQ)) interacts with substrate. ATP-binding residues include D498 and G535. N536 is a Mg(2+) binding site. A substrate-binding site is contributed by S538.

It belongs to the FGAMS family. As to quaternary structure, monomer. Part of the FGAM synthase complex composed of 1 PurL, 1 PurQ and 2 PurS subunits.

The protein resides in the cytoplasm. The enzyme catalyses N(2)-formyl-N(1)-(5-phospho-beta-D-ribosyl)glycinamide + L-glutamine + ATP + H2O = 2-formamido-N(1)-(5-O-phospho-beta-D-ribosyl)acetamidine + L-glutamate + ADP + phosphate + H(+). The protein operates within purine metabolism; IMP biosynthesis via de novo pathway; 5-amino-1-(5-phospho-D-ribosyl)imidazole from N(2)-formyl-N(1)-(5-phospho-D-ribosyl)glycinamide: step 1/2. Its function is as follows. Part of the phosphoribosylformylglycinamidine synthase complex involved in the purines biosynthetic pathway. Catalyzes the ATP-dependent conversion of formylglycinamide ribonucleotide (FGAR) and glutamine to yield formylglycinamidine ribonucleotide (FGAM) and glutamate. The FGAM synthase complex is composed of three subunits. PurQ produces an ammonia molecule by converting glutamine to glutamate. PurL transfers the ammonia molecule to FGAR to form FGAM in an ATP-dependent manner. PurS interacts with PurQ and PurL and is thought to assist in the transfer of the ammonia molecule from PurQ to PurL. The polypeptide is Phosphoribosylformylglycinamidine synthase subunit PurL (Caulobacter vibrioides (strain ATCC 19089 / CIP 103742 / CB 15) (Caulobacter crescentus)).